Here is a 470-residue protein sequence, read N- to C-terminus: Peripherin (470 aa).

A head region spans residues 1 to 99 (MSHHPSGLRA…FLATRSNEKQ (99 aa)). The residue at position 17 (Tyr17) is a 3'-nitrotyrosine. Residues Ser28, Ser50, and Ser59 each carry the phosphoserine modification. Residues 97-407 (EKQELQELND…KLLEGEESRI (311 aa)) enclose the IF rod domain. The coil 1A stretch occupies residues 100-132 (ELQELNDRFANFIEKVRFLEQQNAALRGELSQA). Residues 133–143 (RGQEPARADQL) are linker 1. Residues 144–239 (CQQELRELRR…KLHEEELRDL (96 aa)) form a coil 1B region. The interval 240-262 (QVSVESQQVQQVEVEATVKPELT) is linker 2. The coil 2 stretch occupies residues 263–405 (AALRDIRAQY…YRKLLEGEES (143 aa)). Tyr379 is modified (3'-nitrotyrosine). A tail region spans residues 406–470 (RISVPVHSFA…ELDKSSAHSY (65 aa)). Residues 447-470 (NGEVVTESQKEQRSELDKSSAHSY) are disordered. Over residues 454 to 470 (SQKEQRSELDKSSAHSY) the composition is skewed to basic and acidic residues. Tyr470 carries the post-translational modification Phosphotyrosine.

It belongs to the intermediate filament family. As to quaternary structure, forms homodimers (in vitro). Homopolymerizes into a filamentous network (in vitro). Forms heterodimers with NEFL, NEFM or NEFH (in vitro). Interacts with DST (via C-terminus). Interacts with RAB7A; the interaction is direct. Interacts with PRKCE (via phorbol-ester/DAG-type 2 domain). Post-translationally, phosphorylated; phosphorylation increases after nerve injury in regenerating neurons. As to expression, expressed in the neurons of the outer hair cells in the organ of Corti and to a lesser extent in type I spiral ganglion cells.

The protein localises to the cytoplasm. The protein resides in the cytoskeleton. It localises to the cell projection. It is found in the axon. Its subcellular location is the perikaryon. Functionally, class-III neuronal intermediate filament protein. May form an independent structural network without the involvement of other neurofilaments or may cooperate with the neuronal intermediate filament proteins NEFL, NEFH, NEFM and INA to form a filamentous network. Assembly of the neuronal intermediate filaments may be regulated by RAB7A. Plays a role in the development of unmyelinated sensory neurons. May be involved in axon elongation and axon regeneration after injury. Inhibits neurite extension in type II spiral ganglion neurons in the cochlea. The protein is Peripherin (PRPH) of Homo sapiens (Human).